The primary structure comprises 446 residues: Dual specificity mitogen-activated protein kinase kinase 2 (446 aa).

The span at 27 to 42 (SSGSSAGLGFQGQSQQ) shows a compositional bias: low complexity. Residues 27 to 51 (SSGSSAGLGFQGQSQQHSTVNSMQG) are disordered. A Protein kinase domain is found at 149–414 (LKDLGEIGRG…YKELLKHPFI (266 aa)). Residues 155-163 (IGRGAYGSV) and lysine 178 contribute to the ATP site. Aspartate 276 acts as the Proton acceptor in catalysis. Serine 304 bears the Phosphoserine; by RAF mark. Threonine 308 is subject to Phosphothreonine; by RAF.

Belongs to the protein kinase superfamily. STE Ser/Thr protein kinase family. MAP kinase kinase subfamily. MAPKK is itself dependent on Ser/Thr phosphorylation for activity catalyzed by MAP kinase kinase kinases. In terms of tissue distribution, expressed abundantly in the adult brain and muscle.

It catalyses the reaction L-seryl-[protein] + ATP = O-phospho-L-seryl-[protein] + ADP + H(+). The catalysed reaction is L-threonyl-[protein] + ATP = O-phospho-L-threonyl-[protein] + ADP + H(+). The enzyme catalyses L-tyrosyl-[protein] + ATP = O-phospho-L-tyrosyl-[protein] + ADP + H(+). In terms of biological role, catalyzes the concomitant phosphorylation of a threonine and a tyrosine residue in a Thr-Glu-Tyr sequence located in MAP kinases. The chain is Dual specificity mitogen-activated protein kinase kinase 2 (map2k2) from Xenopus laevis (African clawed frog).